We begin with the raw amino-acid sequence, 192 residues long: Type-4 uracil-DNA glycosylase (192 aa).

2 residues coordinate [4Fe-4S] cluster: C18 and C21. Uracil-binding positions include 45–47 (GEG), F59, and N85. 2 residues coordinate [4Fe-4S] cluster: C89 and C105. Position 161 (H161) interacts with uracil.

This sequence belongs to the uracil-DNA glycosylase (UDG) superfamily. Type 4 (UDGa) family.

It catalyses the reaction Hydrolyzes single-stranded DNA or mismatched double-stranded DNA and polynucleotides, releasing free uracil.. In terms of biological role, removes uracil bases that are present in DNA as a result of either deamination of cytosine or misincorporation of dUMP instead of dTMP. Can remove uracil from double-stranded DNA containing either a U/G or U/A base pair as well as from single-stranded DNA. This chain is Type-4 uracil-DNA glycosylase, found in Thermotoga maritima (strain ATCC 43589 / DSM 3109 / JCM 10099 / NBRC 100826 / MSB8).